A 348-amino-acid polypeptide reads, in one-letter code: Olfactory receptor 2T4 (348 aa).

Topologically, residues 1 to 57 are extracellular; sequence MDNITWMASHTGWSDFILMGLFRQSKHPMANITWMANHTGWSDFILLGLFRQSKHPA. N-linked (GlcNAc...) asparagine glycosylation is found at Asn-31 and Asn-37. A helical membrane pass occupies residues 58-81; the sequence is LLCVVIFVVFLMALSGNAVLILLI. Topologically, residues 82-89 are cytoplasmic; the sequence is HCDAHLHT. A helical transmembrane segment spans residues 90–111; the sequence is PMYFFISQLSLMDMAYISVTVP. Over 112 to 132 the chain is Extracellular; it reads KMLLDQVMGVNKISAPECGMQ. Cysteines 129 and 221 form a disulfide. Residues 133-152 form a helical membrane-spanning segment; sequence MFFYVTLAGSEFFLLATMAY. The Cytoplasmic portion of the chain corresponds to 153–171; that stretch reads DRYVAICHPLRYPVLMNHR. Residues 172 to 190 form a helical membrane-spanning segment; the sequence is VCLFLSSGCWFLGSVDGFT. Over 191-227 the chain is Extracellular; that stretch reads FTPITMTFPFRGSREIHHFFCEVPAVLNLSCSDTSLY. Asn-218 is a glycosylation site (N-linked (GlcNAc...) asparagine). A helical transmembrane segment spans residues 228–251; the sequence is EIFMYLCCVLMLLIPVVIISSSYL. The Cytoplasmic portion of the chain corresponds to 252–268; sequence LILLTIHGMNSAEGRKK. Residues 269 to 291 form a helical membrane-spanning segment; it reads AFATCSSHLTVVILFYGAAIYTY. Residues 292–304 lie on the Extracellular side of the membrane; the sequence is MLPSSYHTPEKDM. The helical transmembrane segment at 305 to 324 threads the bilayer; it reads MVSVFYTILTPVVNPLIYSL. Over 325 to 348 the chain is Cytoplasmic; that stretch reads RNKDVMGALKKMLTVEPAFQKAME.

Belongs to the G-protein coupled receptor 1 family.

It is found in the cell membrane. Functionally, odorant receptor. The protein is Olfactory receptor 2T4 (OR2T4) of Homo sapiens (Human).